Reading from the N-terminus, the 702-residue chain is Dynein axonemal intermediate chain 1 (702 aa).

A disordered region spans residues 1–58 (MLPASSKMPHKQPPPPRKQSISMGRGARKRDEDSGTEVGEGTDEWVQSKATVKPPDQL). Phosphoserine occurs at positions 134 and 137. WD repeat units follow at residues 383–423 (SSES…SQPS), 432–475 (KHTD…LVHT), 540–580 (AHNM…PMFI), 582–622 (DLNS…YEAI), and 630–669 (KKKN…RKMP).

This sequence belongs to the dynein intermediate chain family. In terms of assembly, consists of at least two heavy chains and a number of intermediate and light chains. Interacts with BICD2. Interacts with CFAP45 and CFAP52. Interacts with CFAP53.

The protein resides in the cytoplasm. It localises to the cytoskeleton. It is found in the cilium axoneme. Functionally, part of the dynein complex of respiratory cilia. In Bos taurus (Bovine), this protein is Dynein axonemal intermediate chain 1 (DNAI1).